We begin with the raw amino-acid sequence, 860 residues long: Leucine--tRNA ligase (860 aa).

The 'HIGH' region motif lies at 42-52; that stretch reads PYPSGRLHMGH. A 'KMSKS' region motif is present at residues 619 to 623; that stretch reads KMSKS. Residue Lys-622 coordinates ATP.

Belongs to the class-I aminoacyl-tRNA synthetase family.

The protein localises to the cytoplasm. It catalyses the reaction tRNA(Leu) + L-leucine + ATP = L-leucyl-tRNA(Leu) + AMP + diphosphate. The protein is Leucine--tRNA ligase of Serratia proteamaculans (strain 568).